Reading from the N-terminus, the 97-residue chain is Large ribosomal subunit protein bL28 (97 aa).

Belongs to the bacterial ribosomal protein bL28 family.

This Brucella abortus (strain S19) protein is Large ribosomal subunit protein bL28.